A 505-amino-acid chain; its full sequence is Glutamate--tRNA ligase (505 aa).

A 'HIGH' region motif is present at residues 12-22 (PSPTGDPHVGT). Residues 253–257 (KLSKR) carry the 'KMSKS' region motif. Lysine 256 provides a ligand contact to ATP.

The protein belongs to the class-I aminoacyl-tRNA synthetase family. Glutamate--tRNA ligase type 1 subfamily. In terms of assembly, monomer.

The protein localises to the cytoplasm. The catalysed reaction is tRNA(Glu) + L-glutamate + ATP = L-glutamyl-tRNA(Glu) + AMP + diphosphate. Catalyzes the attachment of glutamate to tRNA(Glu) in a two-step reaction: glutamate is first activated by ATP to form Glu-AMP and then transferred to the acceptor end of tRNA(Glu). The protein is Glutamate--tRNA ligase of Chlamydia abortus (strain DSM 27085 / S26/3) (Chlamydophila abortus).